The following is a 219-amino-acid chain: Transcriptional regulatory protein QseB (219 aa).

Positions 2–116 (RILLIEDDML…EVAARLEALM (115 aa)) constitute a Response regulatory domain. Residue Asp51 is modified to 4-aspartylphosphate. Residues 124–218 (SNELRHGNVM…VHGIGYTLGE (95 aa)) constitute a DNA-binding region (ompR/PhoB-type).

Phosphorylated by QseC.

The protein resides in the cytoplasm. Its function is as follows. Member of a two-component regulatory system QseB/QseC. Activates the flagella regulon by activating transcription of FlhDC. Currently it is not known whether this effect is direct or not. The chain is Transcriptional regulatory protein QseB (qseB) from Escherichia coli O157:H7.